A 659-amino-acid chain; its full sequence is Chaperone protein DnaK (659 aa).

A Phosphothreonine; by autocatalysis modification is found at Thr-201. Over residues 571 to 592 (RSALKEDAPTEKIKEASDELSR) the composition is skewed to basic and acidic residues. Residues 571–659 (RSALKEDAPT…DVEIVDKPND (89 aa)) are disordered. A compositionally biased stretch (low complexity) spans 600–613 (AMQSQSASAAANAQ).

Belongs to the heat shock protein 70 family.

Its function is as follows. Acts as a chaperone. The chain is Chaperone protein DnaK from Chlamydia abortus (strain DSM 27085 / S26/3) (Chlamydophila abortus).